The chain runs to 355 residues: Nuclear hormone receptor family member nhr-127 (355 aa).

The segment at residues 10–86 is a DNA-binding region (nuclear receptor); it reads SIPCEVCKNQ…AGMKAEKIQK (77 aa). 2 NR C4-type zinc fingers span residues 13 to 33 and 49 to 69; these read CEVCKNQSNGYHFEVLSCGAC and CKDGKKRCQIRYLDRHFCRYC. The region spanning 126 to 355 is the NR LBD domain; it reads NPHNASEGCS…IVQIVQNNFY (230 aa).

The protein belongs to the nuclear hormone receptor family.

The protein resides in the nucleus. Its function is as follows. Orphan nuclear receptor. May play a role in modulation of lifespan and immunity. This chain is Nuclear hormone receptor family member nhr-127 (nhr-127), found in Caenorhabditis elegans.